The chain runs to 311 residues: Putative ribose-phosphate pyrophosphokinase 2 (311 aa).

Residues Asp38–Glu40 and Arg97–Gln98 contribute to the ATP site. 2 residues coordinate Mg(2+): His131 and Asp171. Asp219 is a D-ribose 5-phosphate binding site.

This sequence belongs to the ribose-phosphate pyrophosphokinase family. Class I subfamily. In terms of assembly, homohexamer. The cofactor is Mg(2+).

Its subcellular location is the cytoplasm. It carries out the reaction D-ribose 5-phosphate + ATP = 5-phospho-alpha-D-ribose 1-diphosphate + AMP + H(+). Its pathway is metabolic intermediate biosynthesis; 5-phospho-alpha-D-ribose 1-diphosphate biosynthesis; 5-phospho-alpha-D-ribose 1-diphosphate from D-ribose 5-phosphate (route I): step 1/1. Functionally, involved in the biosynthesis of the central metabolite phospho-alpha-D-ribosyl-1-pyrophosphate (PRPP) via the transfer of pyrophosphoryl group from ATP to 1-hydroxyl of ribose-5-phosphate (Rib-5-P). This Listeria innocua serovar 6a (strain ATCC BAA-680 / CLIP 11262) protein is Putative ribose-phosphate pyrophosphokinase 2.